Reading from the N-terminus, the 391-residue chain is Formate-dependent phosphoribosylglycinamide formyltransferase (391 aa).

N(1)-(5-phospho-beta-D-ribosyl)glycinamide is bound by residues E18–L19 and E78. Residues R110, K151, S156–Q161, E191–I194, and E199 contribute to the ATP site. Residues D115 to L305 enclose the ATP-grasp domain. The Mg(2+) site is built by E264 and E276. N(1)-(5-phospho-beta-D-ribosyl)glycinamide contacts are provided by residues D283, K353, and R360 to R361.

Belongs to the PurK/PurT family. In terms of assembly, homodimer.

It carries out the reaction N(1)-(5-phospho-beta-D-ribosyl)glycinamide + formate + ATP = N(2)-formyl-N(1)-(5-phospho-beta-D-ribosyl)glycinamide + ADP + phosphate + H(+). Its pathway is purine metabolism; IMP biosynthesis via de novo pathway; N(2)-formyl-N(1)-(5-phospho-D-ribosyl)glycinamide from N(1)-(5-phospho-D-ribosyl)glycinamide (formate route): step 1/1. Functionally, involved in the de novo purine biosynthesis. Catalyzes the transfer of formate to 5-phospho-ribosyl-glycinamide (GAR), producing 5-phospho-ribosyl-N-formylglycinamide (FGAR). Formate is provided by PurU via hydrolysis of 10-formyl-tetrahydrofolate. The protein is Formate-dependent phosphoribosylglycinamide formyltransferase of Synechococcus elongatus (strain ATCC 33912 / PCC 7942 / FACHB-805) (Anacystis nidulans R2).